Here is a 95-residue protein sequence, read N- to C-terminus: uncharacterized protein (95 aa).

A coiled-coil region spans residues 14 to 50 (KMEQKLQEQLDGLLEKYTELLLGETNDELKEEVKQWI).

This is an uncharacterized protein from Bacillus subtilis (strain 168).